A 941-amino-acid polypeptide reads, in one-letter code: Replicative DNA helicase DnaB (941 aa).

The tract at residues 1-25 (MAEFEERPRLSIGEEEAPPYPLEKL) is disordered. One can recognise an SF4 helicase; first part domain in the interval 214-484 (RPGGITGVPS…PVYRLTTRLG (271 aa)). 245-252 (ARPSMGKT) lines the ATP pocket. Residues 534–683 (LLGHLIGDGC…VQSLLLRLGI (150 aa)) enclose the DOD-type homing endonuclease domain. The SF4 helicase; second part domain occupies 646–915 (DGCIQMRRGK…ARFENLTMYQ (270 aa)). The disordered stretch occupies residues 914 to 941 (YQPEPGTPLPETPDETILPSGPPDEAPF).

The protein belongs to the helicase family. DnaB subfamily. In terms of assembly, homohexamer. Post-translationally, upon expression in E.coli this protein undergoes self splicing that involves a post-translational excision of the intervening region (intein) followed by peptide ligation.

It catalyses the reaction Couples ATP hydrolysis with the unwinding of duplex DNA at the replication fork by translocating in the 5'-3' direction. This creates two antiparallel DNA single strands (ssDNA). The leading ssDNA polymer is the template for DNA polymerase III holoenzyme which synthesizes a continuous strand.. It carries out the reaction ATP + H2O = ADP + phosphate + H(+). In terms of biological role, the main replicative DNA helicase, it participates in initiation and elongation during chromosome replication. Travels ahead of the DNA replisome, separating dsDNA into templates for DNA synthesis. A processive ATP-dependent 5'-3' DNA helicase it has DNA-dependent ATPase activity. The intein is an endonuclease. This Rhodothermus marinus (Rhodothermus obamensis) protein is Replicative DNA helicase DnaB.